Reading from the N-terminus, the 159-residue chain is Ribosomal RNA large subunit methyltransferase H (159 aa).

Residues Leu-76, Gly-108, and 127 to 132 (FSKMTF) contribute to the S-adenosyl-L-methionine site.

It belongs to the RNA methyltransferase RlmH family. Homodimer.

The protein resides in the cytoplasm. It carries out the reaction pseudouridine(1915) in 23S rRNA + S-adenosyl-L-methionine = N(3)-methylpseudouridine(1915) in 23S rRNA + S-adenosyl-L-homocysteine + H(+). Its function is as follows. Specifically methylates the pseudouridine at position 1915 (m3Psi1915) in 23S rRNA. This Oceanobacillus iheyensis (strain DSM 14371 / CIP 107618 / JCM 11309 / KCTC 3954 / HTE831) protein is Ribosomal RNA large subunit methyltransferase H.